The primary structure comprises 608 residues: Phosphomethylpyrimidine synthase (608 aa).

Residues Asn216, Met245, Tyr274, His310, 330–332, 371–374, and Glu410 contribute to the substrate site; these read SRG and DGLR. Position 414 (His414) interacts with Zn(2+). Tyr437 lines the substrate pocket. Residue His478 participates in Zn(2+) binding. [4Fe-4S] cluster-binding residues include Cys558, Cys561, and Cys566.

It belongs to the ThiC family. As to quaternary structure, homodimer. The cofactor is [4Fe-4S] cluster.

The catalysed reaction is 5-amino-1-(5-phospho-beta-D-ribosyl)imidazole + S-adenosyl-L-methionine = 4-amino-2-methyl-5-(phosphooxymethyl)pyrimidine + CO + 5'-deoxyadenosine + formate + L-methionine + 3 H(+). It participates in cofactor biosynthesis; thiamine diphosphate biosynthesis. In terms of biological role, catalyzes the synthesis of the hydroxymethylpyrimidine phosphate (HMP-P) moiety of thiamine from aminoimidazole ribotide (AIR) in a radical S-adenosyl-L-methionine (SAM)-dependent reaction. This is Phosphomethylpyrimidine synthase from Ruegeria sp. (strain TM1040) (Silicibacter sp.).